A 231-amino-acid polypeptide reads, in one-letter code: uncharacterized protein (231 aa).

Positions 1–19 (MKFKFLLTPLLSSVLFLSA) are cleaved as a signal peptide. Cys-20 carries N-palmitoyl cysteine lipidation. Residue Cys-20 is the site of S-diacylglycerol cysteine attachment.

It belongs to the MG439/MG440 family.

The protein localises to the cell membrane. This is an uncharacterized protein from Mycoplasma pneumoniae (strain ATCC 29342 / M129 / Subtype 1) (Mycoplasmoides pneumoniae).